A 184-amino-acid chain; its full sequence is Cathelicidin-related peptide Pt_CRAMP2 (184 aa).

The first 22 residues, 1–22, serve as a signal peptide directing secretion; it reads MDGFFWKTWLVVAALAIGGTSS. A propeptide spanning residues 23 to 150 is cleaved from the precursor; that stretch reads LPHKPLTYEE…EDEKDQPRRV (128 aa). Disulfide bonds link Cys81–Cys92 and Cys103–Cys120. Residues 125–144 are compositionally biased toward acidic residues; it reads EDEEQNQEEEEEEEKEEDEK. The interval 125-147 is disordered; it reads EDEEQNQEEEEEEEKEEDEKDQP.

Belongs to the cathelicidin family. As to expression, expressed by the venom gland.

Its subcellular location is the secreted. It is found in the target cell membrane. In terms of biological role, potent antimicrobial peptide against most of Gram-negative bacteria, some Gram-positive bacteria (Bacillus) and some fungi (C.albicans, P.pastoris, A.terreus, A.nidulans, and C.globosum). Adopts an amphipathic alpha helical conformation, that may allow to partition into the target membrane. No hemolytic and cytotoxic activities have been observed on mammalian cells. The chain is Cathelicidin-related peptide Pt_CRAMP2 from Pseudonaja textilis (Eastern brown snake).